We begin with the raw amino-acid sequence, 219 residues long: MTQDELKKAVGWAALKYVRPGTIVGVGTGSTASHFIDALATMKGQIEGAVSSSDASTARLKSLGIPVFDLNEVDSLDIYVDGADEINGAMQMIKGGGAALTREKIVAAVAKKFVCIVDASKQVDILGSFPLPVEVIPMARAYVARELVKLGGQPVYRQGVLTDNGNVILDVHNLQIMEPCKLENAINAIAGVVTVGLFANRGADVALVGCADGVKTLTL.

Residues 28-31 (TGST), 81-84 (DGAD), and 94-97 (KGGG) contribute to the substrate site. Residue Glu-103 is the Proton acceptor of the active site. Lys-121 is a substrate binding site.

It belongs to the ribose 5-phosphate isomerase family. In terms of assembly, homodimer.

The enzyme catalyses aldehydo-D-ribose 5-phosphate = D-ribulose 5-phosphate. The protein operates within carbohydrate degradation; pentose phosphate pathway; D-ribose 5-phosphate from D-ribulose 5-phosphate (non-oxidative stage): step 1/1. Catalyzes the reversible conversion of ribose-5-phosphate to ribulose 5-phosphate. The polypeptide is Ribose-5-phosphate isomerase A (Edwardsiella ictaluri (strain 93-146)).